Consider the following 985-residue polypeptide: Invasin (985 aa).

The D1 stretch occupies residues S494 to K594. The Extracellular segment spans residues S494–I985. Big-1 domains follow at residues T503–K594 and K601–T691. Residues G595–P694 are D2. The interval I695 to V794 is D3. The tract at residues P795–N886 is D4. Residues P795–I985 are integrin-binding. The interval R887–I985 is D5. C906 and C981 are oxidised to a cystine.

This sequence belongs to the intimin/invasin family.

The protein localises to the cell surface. In terms of biological role, invasin is a protein that allows enteric bacteria to penetrate cultured mammalian cells. The entry of invasin in the cell is mediated by binding several beta-1 chain integrins. This Yersinia pseudotuberculosis serotype I (strain IP32953) protein is Invasin.